Consider the following 841-residue polypeptide: Homeobox-leucine zipper protein ATHB-9 (841 aa).

The span at 1 to 18 (MMAHHSMDDRDSPDKGFD) shows a compositional bias: basic and acidic residues. The tract at residues 1–21 (MMAHHSMDDRDSPDKGFDSGK) is disordered. The segment at residues 18 to 81 (DSGKYVRYTP…NRRCREKQRK (64 aa)) is a DNA-binding region (homeobox). A coiled-coil region spans residues 85–118 (RLQTVNRKLSAMNKLLMEENDRLQKQVSNLVYEN). Disordered regions lie at residues 140 to 162 (VVVSGQQRQQQNPTHQHPQRDVN) and 602 to 630 (DQKTNPNDHQSASRTRDLASSLDGSTKTD). Residues 145–155 (QQRQQQNPTHQ) show a composition bias toward low complexity. Residues 160–388 (DVNNPANLLS…IAQETSGEVQ (229 aa)) enclose the START domain. Over residues 603 to 614 (QKTNPNDHQSAS) the composition is skewed to polar residues.

The protein belongs to the HD-ZIP homeobox family. Class III subfamily. As to quaternary structure, binds DNA as homodimer. Interacts with ESR1 and ESR2. Interacts with ZPR3.

The protein resides in the nucleus. Probable transcription factor involved in the determination of adaxial-abaxial polarity in ovule primordium. Specifies adaxial leaf fates. Binds to the DNA sequence 5'-GTAAT[GC]ATTAC-3'. This chain is Homeobox-leucine zipper protein ATHB-9 (ATHB-9), found in Arabidopsis thaliana (Mouse-ear cress).